The chain runs to 180 residues: ATP synthase subunit b, chloroplastic (180 aa).

A helical transmembrane segment spans residues 28-48 (VTTLINIGVVLCLLIIFGKGF).

Belongs to the ATPase B chain family. As to quaternary structure, F-type ATPases have 2 components, F(1) - the catalytic core - and F(0) - the membrane proton channel. F(1) has five subunits: alpha(3), beta(3), gamma(1), delta(1), epsilon(1). F(0) has four main subunits: a(1), b(1), b'(1) and c(10-14). The alpha and beta chains form an alternating ring which encloses part of the gamma chain. F(1) is attached to F(0) by a central stalk formed by the gamma and epsilon chains, while a peripheral stalk is formed by the delta, b and b' chains.

It localises to the plastid. Its subcellular location is the chloroplast thylakoid membrane. Its function is as follows. F(1)F(0) ATP synthase produces ATP from ADP in the presence of a proton or sodium gradient. F-type ATPases consist of two structural domains, F(1) containing the extramembraneous catalytic core and F(0) containing the membrane proton channel, linked together by a central stalk and a peripheral stalk. During catalysis, ATP synthesis in the catalytic domain of F(1) is coupled via a rotary mechanism of the central stalk subunits to proton translocation. Component of the F(0) channel, it forms part of the peripheral stalk, linking F(1) to F(0). The sequence is that of ATP synthase subunit b, chloroplastic from Cuscuta obtusiflora (Peruvian dodder).